The following is a 354-amino-acid chain: Uroporphyrinogen decarboxylase (354 aa).

Substrate is bound by residues 27–31, Asp77, Tyr154, Thr209, and His327; that span reads RQAGR.

This sequence belongs to the uroporphyrinogen decarboxylase family. Homodimer.

The protein localises to the cytoplasm. The catalysed reaction is uroporphyrinogen III + 4 H(+) = coproporphyrinogen III + 4 CO2. Its pathway is porphyrin-containing compound metabolism; protoporphyrin-IX biosynthesis; coproporphyrinogen-III from 5-aminolevulinate: step 4/4. Its function is as follows. Catalyzes the decarboxylation of four acetate groups of uroporphyrinogen-III to yield coproporphyrinogen-III. The chain is Uroporphyrinogen decarboxylase from Salmonella heidelberg (strain SL476).